A 240-amino-acid chain; its full sequence is Methylthioribulose-1-phosphate dehydratase (240 aa).

Cysteine 99 contacts substrate. Residues histidine 116 and histidine 118 each contribute to the Zn(2+) site. Glutamate 145 (proton donor/acceptor) is an active-site residue. Histidine 201 contributes to the Zn(2+) binding site.

The protein belongs to the aldolase class II family. MtnB subfamily. Zn(2+) serves as cofactor.

It localises to the cytoplasm. The catalysed reaction is 5-(methylsulfanyl)-D-ribulose 1-phosphate = 5-methylsulfanyl-2,3-dioxopentyl phosphate + H2O. Its pathway is amino-acid biosynthesis; L-methionine biosynthesis via salvage pathway; L-methionine from S-methyl-5-thio-alpha-D-ribose 1-phosphate: step 2/6. In terms of biological role, catalyzes the dehydration of methylthioribulose-1-phosphate (MTRu-1-P) into 2,3-diketo-5-methylthiopentyl-1-phosphate (DK-MTP-1-P). In Paracoccidioides brasiliensis (strain Pb18), this protein is Methylthioribulose-1-phosphate dehydratase.